Here is a 404-residue protein sequence, read N- to C-terminus: Clavilactone A biosynthesis cluster protein Y (404 aa).

Its function is as follows. Part of the gene cluster that mediates the biosynthesis of clavilactone A, a meroterpenoid that features a unique benzo-fused ten-membered carbocyclic ring unit with an alpha,beta-epoxy-gamma-lactone moiety, forming an intriguing 10/5/3 tricyclic nested skeleton. ClaR, ClaS and ClaT are sufficient to produce clavilactone A and the function of claY, if any, has still to be identified. The biosynthesis begins with the prenyltransferase claS that transfers geranyl pyrophosphate (GPP) to hydroquinone to produces geranylhydroquinon. The cytochrome P450 monooxygenase claR then catalyzes the diradical coupling reaction between the intramolecular hydroquinone and allyl moieties to form the benzo-fused ten-membered carbocyclic ring unit of wigantol. Finally the cytochrome P450 monooxygenase claT exquisitely and stereoselectively assembles the alpha,beta-epoxy-gamma-lactone moiety, producing clavilactone A via arnebinol A. This is Clavilactone A biosynthesis cluster protein Y from Ampulloclitocybe clavipes (Club foot).